Reading from the N-terminus, the 76-residue chain is Toxin Acra III-1 (76 aa).

Positions 4 to 67 constitute an LCN-type CS-alpha/beta domain; the sequence is PGNYPLDTRG…IWDAVKNHCT (64 aa). Disulfide bonds link Cys18-Cys41, Cys27-Cys46, and Cys31-Cys48.

This sequence belongs to the long (3 C-C) scorpion toxin superfamily. Sodium channel inhibitor family. Beta subfamily. As to expression, expressed by the venom gland.

The protein resides in the secreted. Functionally, binds to sodium channels (Nav) and affects the channel activation process. The sequence is that of Toxin Acra III-1 from Androctonus crassicauda (Arabian fat-tailed scorpion).